Here is a 580-residue protein sequence, read N- to C-terminus: Phosphatase and actin regulator 1 (580 aa).

Residues serine 67 and serine 78 each carry the phosphoserine modification. Phosphothreonine is present on threonine 104. The short motif at 108 to 129 (RRRSKFANLGRIFKPWKWRKKK) is the Nuclear localization signal element. The RPEL 1 repeat unit spans residues 138–163 (AALERKISMRQSREELIKRGVLKEIY). 2 disordered regions span residues 331-355 (EQRV…TKAG) and 376-410 (KENV…SSLY). Residues 335–345 (PCSTSYHSSGL) are compositionally biased toward polar residues. Residues 395-407 (EEEEEEEDEDDDS) are compositionally biased toward acidic residues. RPEL repeat units follow at residues 422 to 447 (DSLA…PRQT), 460 to 484 (TKLT…LKPR), and 498 to 523 (RRLT…IRFS). The interval 462 to 494 (LTRRLSQRPTAEELEQRNILKPRNEQEEQEEKR) is disordered. The residue at position 467 (serine 467) is a Phosphoserine. Basic and acidic residues predominate over residues 471–494 (TAEELEQRNILKPRNEQEEQEEKR). Position 505 is a phosphoserine (serine 505).

It belongs to the phosphatase and actin regulator family. Interacts (via RPEL repeats) with ACTA1 and PPP1CA; ACTA1 and PPP1CA compete for the same binding site. As to expression, detected in umbilical vein endothelial cells.

The protein localises to the cytoplasm. It localises to the synapse. It is found in the nucleus. Functionally, binds actin monomers (G actin) and plays a role in multiple processes including the regulation of actin cytoskeleton dynamics, actin stress fibers formation, cell motility and survival, formation of tubules by endothelial cells, and regulation of PPP1CA activity. Involved in the regulation of cortical neuron migration and dendrite arborization. This Homo sapiens (Human) protein is Phosphatase and actin regulator 1 (PHACTR1).